A 153-amino-acid chain; its full sequence is 6,7-dimethyl-8-ribityllumazine synthase 1 (153 aa).

5-amino-6-(D-ribitylamino)uracil is bound by residues Phe16, 50 to 52 (AYE), and 74 to 76 (CVI). 79–80 (ET) contacts (2S)-2-hydroxy-3-oxobutyl phosphate. The active-site Proton donor is His82. Phe107 is a binding site for 5-amino-6-(D-ribitylamino)uracil. Residue Arg121 participates in (2S)-2-hydroxy-3-oxobutyl phosphate binding.

The protein belongs to the DMRL synthase family.

The catalysed reaction is (2S)-2-hydroxy-3-oxobutyl phosphate + 5-amino-6-(D-ribitylamino)uracil = 6,7-dimethyl-8-(1-D-ribityl)lumazine + phosphate + 2 H2O + H(+). It functions in the pathway cofactor biosynthesis; riboflavin biosynthesis; riboflavin from 2-hydroxy-3-oxobutyl phosphate and 5-amino-6-(D-ribitylamino)uracil: step 1/2. Functionally, catalyzes the formation of 6,7-dimethyl-8-ribityllumazine by condensation of 5-amino-6-(D-ribitylamino)uracil with 3,4-dihydroxy-2-butanone 4-phosphate. This is the penultimate step in the biosynthesis of riboflavin. The polypeptide is 6,7-dimethyl-8-ribityllumazine synthase 1 (Caulobacter vibrioides (strain ATCC 19089 / CIP 103742 / CB 15) (Caulobacter crescentus)).